The chain runs to 422 residues: Replication factor C large subunit (422 aa).

An ATP-binding site is contributed by 63-70; that stretch reads GPPGVGKT.

It belongs to the activator 1 small subunits family. RfcL subfamily. Heteromultimer composed of small subunits (RfcS) and large subunits (RfcL).

Functionally, part of the RFC clamp loader complex which loads the PCNA sliding clamp onto DNA. The sequence is that of Replication factor C large subunit from Pyrobaculum arsenaticum (strain DSM 13514 / JCM 11321 / PZ6).